Reading from the N-terminus, the 161-residue chain is Transcriptional repressor NrdR (161 aa).

The segment at 3–34 (CPYCGARDARVIDSRELNGGESIRRRRECIAC) is a zinc-finger region. An ATP-cone domain is found at 49–139 (LMVVKRDGRR…VYRRFADLED (91 aa)).

It belongs to the NrdR family. The cofactor is Zn(2+).

Its function is as follows. Negatively regulates transcription of bacterial ribonucleotide reductase nrd genes and operons by binding to NrdR-boxes. In Thermomicrobium roseum (strain ATCC 27502 / DSM 5159 / P-2), this protein is Transcriptional repressor NrdR.